The following is a 773-amino-acid chain: Beta-D-xylosidase 3 (773 aa).

Residues 1-23 (MASRNRALFSVSTLFLCFIVCIS) form the signal peptide. N131 carries an N-linked (GlcNAc...) asparagine glycan. D298 is an active-site residue. N-linked (GlcNAc...) asparagine glycans are attached at residues N349, N432, and N770.

It belongs to the glycosyl hydrolase 3 family. As to expression, expressed in flowers and siliques, in the early stage of seed formation and not at seed maturation. Detected exclusively in the endosperm of very young seeds when the embryo is at the globular stage.

It is found in the secreted. It localises to the extracellular space. The protein localises to the extracellular matrix. The catalysed reaction is Hydrolysis of terminal non-reducing alpha-L-arabinofuranoside residues in alpha-L-arabinosides.. Its function is as follows. Involved in the hydrolysis of arabinan. Can hydrolyze (1,3)-alpha-, (1,2)-alpha-linked side group residues and non-reducing terminal L-arabinofuranose residues of debranched (1,5)-alpha-L-arabinan backbone. Also acts as a beta-D-xylosidase, releasing D-xylose from arabinoxylan and xylan. The sequence is that of Beta-D-xylosidase 3 (BXL3) from Arabidopsis thaliana (Mouse-ear cress).